Consider the following 130-residue polypeptide: Large ribosomal subunit protein bL12 (130 aa).

The segment at 94–114 (MTEGLPKTVKEKTSKSDAEDT) is disordered.

Belongs to the bacterial ribosomal protein bL12 family. As to quaternary structure, homodimer. Part of the ribosomal stalk of the 50S ribosomal subunit. Forms a multimeric L10(L12)X complex, where L10 forms an elongated spine to which 2 to 4 L12 dimers bind in a sequential fashion. Binds GTP-bound translation factors.

Functionally, forms part of the ribosomal stalk which helps the ribosome interact with GTP-bound translation factors. Is thus essential for accurate translation. The protein is Large ribosomal subunit protein bL12 of Chlamydia caviae (strain ATCC VR-813 / DSM 19441 / 03DC25 / GPIC) (Chlamydophila caviae).